Consider the following 464-residue polypeptide: Glycosyl hydrolase family 109 protein 1 (464 aa).

The N-terminal stretch at 1 to 16 is a signal peptide; it reads MFKHLNALFIGLALFA. Residue Cys17 is the site of N-palmitoyl cysteine attachment. Cys17 carries the S-diacylglycerol cysteine lipid modification. Residues 63–64, Asp85, 134–137, 154–155, and Asn183 contribute to the NAD(+) site; these read MR, WKHH, and EV. Substrate is bound by residues Tyr212, Arg228, 240 to 243, and Tyr318; that span reads YATH. NAD(+) is bound at residue Tyr240.

The protein belongs to the Gfo/Idh/MocA family. Glycosyl hydrolase 109 subfamily. NAD(+) serves as cofactor.

The protein localises to the cell membrane. Glycosidase. Has no alpha-N-acetylgalactosaminidase activity. The sequence is that of Glycosyl hydrolase family 109 protein 1 from Bacteroides fragilis (strain ATCC 25285 / DSM 2151 / CCUG 4856 / JCM 11019 / LMG 10263 / NCTC 9343 / Onslow / VPI 2553 / EN-2).